A 469-amino-acid polypeptide reads, in one-letter code: GTPase Der (469 aa).

EngA-type G domains follow at residues 30–193 (PVLA…PEVA) and 203–376 (RRVA…ASWD). Residues 36–43 (GRPNVGKS), 83–87 (DTGGW), 145–148 (NKVD), 209–216 (GKPNVGKS), 256–260 (DTAGL), and 321–324 (NKWD) each bind GTP. Residues 377–459 (TRIPTGPLNS…PIRINVRVRE (83 aa)) enclose the KH-like domain.

Belongs to the TRAFAC class TrmE-Era-EngA-EngB-Septin-like GTPase superfamily. EngA (Der) GTPase family. As to quaternary structure, associates with the 50S ribosomal subunit.

GTPase that plays an essential role in the late steps of ribosome biogenesis. The polypeptide is GTPase Der (Mycobacterium ulcerans (strain Agy99)).